We begin with the raw amino-acid sequence, 137 residues long: ATP synthase epsilon chain (137 aa).

Belongs to the ATPase epsilon chain family. F-type ATPases have 2 components, CF(1) - the catalytic core - and CF(0) - the membrane proton channel. CF(1) has five subunits: alpha(3), beta(3), gamma(1), delta(1), epsilon(1). CF(0) has three main subunits: a, b and c.

The protein localises to the cellular thylakoid membrane. Functionally, produces ATP from ADP in the presence of a proton gradient across the membrane. This Nostoc sp. (strain PCC 7120 / SAG 25.82 / UTEX 2576) protein is ATP synthase epsilon chain (atpC).